The sequence spans 117 residues: Ribonuclease P protein component 4 (117 aa).

Zn(2+) is bound by residues C63, C66, C92, and C95.

Belongs to the eukaryotic/archaeal RNase P protein component 4 family. As to quaternary structure, consists of a catalytic RNA component and at least 4 protein subunits. Forms a subcomplex with Rnp1 which stimulates the catalytic RNA. Requires Zn(2+) as cofactor.

The protein localises to the cytoplasm. It catalyses the reaction Endonucleolytic cleavage of RNA, removing 5'-extranucleotides from tRNA precursor.. Part of ribonuclease P, a protein complex that generates mature tRNA molecules by cleaving their 5'-ends. The RNA is catalytic, but its KM for pre-tRNA is 170-fold decreased in the presence of the 4 known protein subunits (Rnp1-4). The protein subunits also decrease the amount of Mg(2+) needed for activity. The chain is Ribonuclease P protein component 4 from Pyrococcus furiosus (strain ATCC 43587 / DSM 3638 / JCM 8422 / Vc1).